Here is a 425-residue protein sequence, read N- to C-terminus: Formyl-CoA:oxalate CoA-transferase (425 aa).

CoA-binding positions include 17-18 (QS), arginine 38, 72-75 (LDTK), 96-98 (NFG), arginine 104, and 136-139 (KVYE). The Nucleophile role is filled by aspartate 168. 247 to 249 (GGQ) contributes to the substrate binding site.

This sequence belongs to the CoA-transferase III family. Frc subfamily. Homodimer.

It catalyses the reaction formyl-CoA + oxalate = oxalyl-CoA + formate. It functions in the pathway metabolic intermediate degradation; oxalate degradation; CO(2) and formate from oxalate: step 1/2. Functionally, involved in the catabolism of oxalate and in the adapatation to low pH via the induction of the oxalate-dependent acid tolerance response (ATR). Catalyzes the transfer of the CoA moiety from formyl-CoA to oxalate. The protein is Formyl-CoA:oxalate CoA-transferase of Rhodopseudomonas palustris (strain ATCC BAA-98 / CGA009).